The following is a 279-amino-acid chain: MKVVVADHSGFCFGVEKAIDTAFKELEYKDSKDIYTLGPLIHNQQVISHLEENGIKVVSDLNSGKDGVVIIRSHGVPKDVYKDASEKKIDLVDATCPFVRKIQNIVEEYQKKGYHIVIIGDPSHPEVIGINGWCDNTAHIVKNEDDVHRIPFLDNLCIVAQTTISTSLYTELTAMIEQKSNNVLKFNTICSATRDRQNSARNLAKEVDVMIIVGGYHSSNTQKLVEICKQEKPDTTFHIETAGEIPMNILKNYESVGVTAGASTPKWIIDEVIDRINNL.

Cys12 is a [4Fe-4S] cluster binding site. (2E)-4-hydroxy-3-methylbut-2-enyl diphosphate contacts are provided by His42 and His74. Residues His42 and His74 each coordinate dimethylallyl diphosphate. Isopentenyl diphosphate contacts are provided by His42 and His74. Residue Cys96 coordinates [4Fe-4S] cluster. His124 is a binding site for (2E)-4-hydroxy-3-methylbut-2-enyl diphosphate. A dimethylallyl diphosphate-binding site is contributed by His124. His124 is a binding site for isopentenyl diphosphate. Glu126 functions as the Proton donor in the catalytic mechanism. Thr162 contributes to the (2E)-4-hydroxy-3-methylbut-2-enyl diphosphate binding site. Cys190 contacts [4Fe-4S] cluster. (2E)-4-hydroxy-3-methylbut-2-enyl diphosphate-binding residues include Ser218, Ser219, Asn220, and Ser263. 4 residues coordinate dimethylallyl diphosphate: Ser218, Ser219, Asn220, and Ser263. Residues Ser218, Ser219, Asn220, and Ser263 each coordinate isopentenyl diphosphate.

The protein belongs to the IspH family. The cofactor is [4Fe-4S] cluster.

The enzyme catalyses isopentenyl diphosphate + 2 oxidized [2Fe-2S]-[ferredoxin] + H2O = (2E)-4-hydroxy-3-methylbut-2-enyl diphosphate + 2 reduced [2Fe-2S]-[ferredoxin] + 2 H(+). The catalysed reaction is dimethylallyl diphosphate + 2 oxidized [2Fe-2S]-[ferredoxin] + H2O = (2E)-4-hydroxy-3-methylbut-2-enyl diphosphate + 2 reduced [2Fe-2S]-[ferredoxin] + 2 H(+). It functions in the pathway isoprenoid biosynthesis; dimethylallyl diphosphate biosynthesis; dimethylallyl diphosphate from (2E)-4-hydroxy-3-methylbutenyl diphosphate: step 1/1. The protein operates within isoprenoid biosynthesis; isopentenyl diphosphate biosynthesis via DXP pathway; isopentenyl diphosphate from 1-deoxy-D-xylulose 5-phosphate: step 6/6. Catalyzes the conversion of 1-hydroxy-2-methyl-2-(E)-butenyl 4-diphosphate (HMBPP) into a mixture of isopentenyl diphosphate (IPP) and dimethylallyl diphosphate (DMAPP). Acts in the terminal step of the DOXP/MEP pathway for isoprenoid precursor biosynthesis. This chain is 4-hydroxy-3-methylbut-2-enyl diphosphate reductase, found in Alkaliphilus oremlandii (strain OhILAs) (Clostridium oremlandii (strain OhILAs)).